The sequence spans 207 residues: Ion-translocating oxidoreductase complex subunit G (207 aa).

Residues 11–31 (GILLGFIALLCTIISAGIFFL) traverse the membrane as a helical segment. Threonine 175 carries the post-translational modification FMN phosphoryl threonine.

Belongs to the RnfG family. The complex is composed of six subunits: RnfA, RnfB, RnfC, RnfD, RnfE and RnfG. FMN serves as cofactor.

The protein resides in the cell inner membrane. Functionally, part of a membrane-bound complex that couples electron transfer with translocation of ions across the membrane. This Haemophilus influenzae (strain ATCC 51907 / DSM 11121 / KW20 / Rd) protein is Ion-translocating oxidoreductase complex subunit G.